A 182-amino-acid chain; its full sequence is Plasmolipin (182 aa).

Residues 1-20 are disordered; the sequence is MAEFPSKVSTRTSSPAQGVG. Residues 1–35 are Cytoplasmic-facing; it reads MAEFPSKVSTRTSSPAQGVGASVSAMRPDLGFVRS. Residues 7 to 16 are compositionally biased toward polar residues; it reads KVSTRTSSPA. S9 is modified (phosphoserine). In terms of domain architecture, MARVEL spans 32-166; it reads FVRSALGVLA…SAFFSFQAWR (135 aa). Residues 36-56 form a helical membrane-spanning segment; it reads ALGVLALLQLVLGLLVWALIA. Over 57–68 the chain is Extracellular; it reads DTPYHLYPAYGW. Residues 69 to 89 form a helical membrane-spanning segment; that stretch reads VMFVAVFLWLVTIVFFIIYLF. The Cytoplasmic portion of the chain corresponds to 90–99; the sequence is QLHMKLYMVP. Residues 100-120 form a helical membrane-spanning segment; sequence WPLVLLVFFVAATVLYITAFV. Topologically, residues 121 to 141 are extracellular; the sequence is ACAAAVDLTSLRGSRPYNQRS. A helical transmembrane segment spans residues 142–162; the sequence is AASFFACLVMIAYGLSAFFSF. Topologically, residues 163 to 182 are cytoplasmic; the sequence is QAWRGVGSNAATSQMAGGYS.

This sequence belongs to the MAL family. In terms of assembly, forms oligomers. In terms of processing, phosphorylated. Detected to the sciatic nerve, brain and kidney. In the sciatic nerve, found in Schwann cells; in the brain, in developing oligodendrocytes, especially of the corpus callosum, of cortical white matter, in the optic nerve and in the stratum radiatum and stratum oriens of the hippocampus. In kidney, segregated to the apical surface of renal tubular epithelia.

The protein localises to the cell membrane. It is found in the myelin membrane. It localises to the apical cell membrane. In terms of biological role, main component of the myelin sheath that plays an important role in myelin membrane biogenesis and myelination. Plays an essential function in apical endocytosis. Regulates epithelial development through the regulation of apical endocytosis. Part of the intracellular machinery that mediates basolateral-to-apical transport of ICAM-1, an essential adhesion receptor in epithelial cells, from the subapical compartment in hepatic epithelial cells. The sequence is that of Plasmolipin (Pllp) from Rattus norvegicus (Rat).